The chain runs to 92 residues: N(2)-fixation sustaining protein CowN (92 aa).

Belongs to the CowN family.

Is required to sustain N(2)-dependent growth in the presence of low levels of carbon monoxide (CO). Probably acts by protecting the N(2) fixation ability of the nitrogenase complex, which is inactivated in the presence of CO. In Rhodopseudomonas palustris (strain HaA2), this protein is N(2)-fixation sustaining protein CowN.